Consider the following 126-residue polypeptide: Aspartate 1-decarboxylase (126 aa).

Residue Ser-25 is the Schiff-base intermediate with substrate; via pyruvic acid of the active site. Ser-25 is subject to Pyruvic acid (Ser). Thr-57 contacts substrate. Catalysis depends on Tyr-58, which acts as the Proton donor. A substrate-binding site is contributed by 72–74; it reads GAA.

It belongs to the PanD family. In terms of assembly, heterooctamer of four alpha and four beta subunits. Requires pyruvate as cofactor. Is synthesized initially as an inactive proenzyme, which is activated by self-cleavage at a specific serine bond to produce a beta-subunit with a hydroxyl group at its C-terminus and an alpha-subunit with a pyruvoyl group at its N-terminus.

The protein localises to the cytoplasm. It catalyses the reaction L-aspartate + H(+) = beta-alanine + CO2. Its pathway is cofactor biosynthesis; (R)-pantothenate biosynthesis; beta-alanine from L-aspartate: step 1/1. Catalyzes the pyruvoyl-dependent decarboxylation of aspartate to produce beta-alanine. The sequence is that of Aspartate 1-decarboxylase from Campylobacter jejuni subsp. jejuni serotype O:23/36 (strain 81-176).